The chain runs to 231 residues: Large ribosomal subunit protein uL1 (231 aa).

Belongs to the universal ribosomal protein uL1 family. In terms of assembly, part of the 50S ribosomal subunit.

Functionally, binds directly to 23S rRNA. The L1 stalk is quite mobile in the ribosome, and is involved in E site tRNA release. Its function is as follows. Protein L1 is also a translational repressor protein, it controls the translation of the L11 operon by binding to its mRNA. The protein is Large ribosomal subunit protein uL1 of Hydrogenovibrio crunogenus (strain DSM 25203 / XCL-2) (Thiomicrospira crunogena).